The primary structure comprises 820 residues: MDTASIRGLSWSTLDPASYNSRKRSFEQMLLQQDSNESSRRTSPSRTHSRVDLERHSSHIVSLSSSNGSPSLEDPENRLYESPASARQYYGDESLILVGFPSAGKKTLGLIASAALRREFVDFDTVFVGKTGLSPREYIEAHGATAYRSVEDELTSEVFRSRQKGCVLVGFFAMASNRQRRLLKSLSTTNPIIHIQRDLGNMIHRGDSDKDRLYRTYQLSEKMHRRFANFEFFNIFQPMADDKPLGPLRLKATEREFVRFLNGIFPQSEASRGLKNLCSSSYTYALQAPSSWLDDPQADYTELDSGADAVEILVEMSPQNQQDLFFKLSQRVAVLRKYCRVPIILDLETSATMNYIAQVNLLELVIRQAPDVIMVSLDMSPHLVKQLSLAKGHSKIIGKYHQKGPISENWDLTNLQTVIDKASLLHCSAIRLTGEAYETNNNFGCVRVVLEARKLSDLPVSCYNTGEYGRSSICLNPILSPVVLPSQSTKQGITLADAQRGLFSSFWRTKKNFTVFGQNVSYSLTPAMHNAACIACGMPHTCDYVESDRLARIREVFERESQGGLAIVYPYKTEVVQMMDEMSLDAKVIGAVNTVVIERISTNEGSPKLYLKGYNTDHIGIRTCIEKNLSPANAIRSQTSALIIGAGGMARAAIYACIKAGVRNICIFNRTEANARRLADYFATVYTNLRLTILTDLSTPWPTDLWHPTIIVSCIPAHKVGDNDAPDFLIPEQWLGSSTGGVFVEFAYKPLVTRLIRFMQSRRSQGWIVADGLDVLVEQGIAQFEILTDRPAPSHIMRRTVREQYSIAQNAHSDHETTET.

The disordered stretch occupies residues 25 to 79 (SFEQMLLQQDSNESSRRTSPSRTHSRVDLERHSSHIVSLSSSNGSPSLEDPENRL). Residues 59-71 (HIVSLSSSNGSPS) show a composition bias toward low complexity.

In the N-terminal section; belongs to the shikimate kinase family. The protein in the 2nd section; belongs to the type-I 3-dehydroquinase family. It in the C-terminal section; belongs to the shikimate dehydrogenase family. Interacts with qutA; transcriptional activator of the quinate utilization pathway genes.

Functionally, multi-domain repressor protein that negatively regulates transcription of the quinate utilization pathway genes. May mediate its repressor activity by binding directly to the qutA activator protein. This chain is Quinate repressor protein (qutR), found in Talaromyces stipitatus (strain ATCC 10500 / CBS 375.48 / QM 6759 / NRRL 1006) (Penicillium stipitatum).